We begin with the raw amino-acid sequence, 1415 residues long: DNA-directed RNA polymerase subunit beta' (1415 aa).

Zn(2+) contacts are provided by Cys72, Cys74, Cys87, and Cys90. The Mg(2+) site is built by Asp463, Asp465, and Asp467. Zn(2+) is bound by residues Cys811, Cys885, Cys892, and Cys895.

Belongs to the RNA polymerase beta' chain family. The RNAP catalytic core consists of 2 alpha, 1 beta, 1 beta' and 1 omega subunit. When a sigma factor is associated with the core the holoenzyme is formed, which can initiate transcription. Mg(2+) serves as cofactor. The cofactor is Zn(2+).

It catalyses the reaction RNA(n) + a ribonucleoside 5'-triphosphate = RNA(n+1) + diphosphate. Its function is as follows. DNA-dependent RNA polymerase catalyzes the transcription of DNA into RNA using the four ribonucleoside triphosphates as substrates. The sequence is that of DNA-directed RNA polymerase subunit beta' from Cereibacter sphaeroides (strain ATCC 17025 / ATH 2.4.3) (Rhodobacter sphaeroides).